Reading from the N-terminus, the 457-residue chain is Guanine nucleotide-binding protein subunit alpha homolog (457 aa).

A G-alpha domain is found at 131 to 457 (RQVKLLLLGA…QRNLNALMLQ (327 aa)). Positions 134 to 147 (KLLLLGAGESGKST) are G1 motif. GTP contacts are provided by residues 139 to 146 (GAGESGKS), 274 to 280 (LHCRKAT), 299 to 303 (DVGGQ), 369 to 372 (NKTD), and Ala429. Mg(2+)-binding residues include Ser146 and Thr280. The segment at 272–280 (DILHCRKAT) is G2 motif. Residues 295–304 (FVFVDVGGQR) are G3 motif. A G4 motif region spans residues 365-372 (ILFLNKTD). The tract at residues 427–432 (TTAIDT) is G5 motif.

This sequence belongs to the G-alpha family. G(12) subfamily. G proteins are composed of 3 units; alpha, beta and gamma. The alpha chain contains the guanine nucleotide binding site. As to expression, in ovary, expressed in nurse cells and oocyte. In early embryos, distributed uniformly. At the extended germband stage, accumulates in the mesoderm.

It is found in the cytoplasm. Functionally, may play a role in a signal transduction pathway used during gastrulation. Required specifically for the ventral furrow and posterior midgut invaginations, where it is necessary for coordinating cell shape changes. Guanine nucleotide-binding proteins (G proteins) are involved as modulators or transducers in various transmembrane signaling systems. The protein is Guanine nucleotide-binding protein subunit alpha homolog (cta) of Drosophila melanogaster (Fruit fly).